We begin with the raw amino-acid sequence, 1267 residues long: BOS complex subunit NOMO2 (1267 aa).

Positions 1 to 31 are cleaved as a signal peptide; it reads MLVGQGAGLLGPAVVTAAVVLLLSGVGPAHG. Residues 32–1155 lie on the Lumenal side of the membrane; sequence SEDIVVGCGG…NPTRKLPEQD (1124 aa). N-linked (GlcNAc...) asparagine glycans are attached at residues Asn-50, Asn-218, and Asn-618. Residues 1156-1176 form a helical membrane-spanning segment; that stretch reads IAQGSYIALPLTLLVLLAGYN. Residues 1177 to 1267 are Cytoplasmic-facing; the sequence is HDKLIPLLLQ…LETTATCIHY (91 aa). The disordered stretch occupies residues 1198-1219; sequence GQAASDNSGPEDAKRQAKKQKT.

As to quaternary structure, component of the back of Sec61 (BOS) complex, composed of NCLN/Nicalin, NOMO (NOMO1, NOMO2 or NOMO3) and TMEM147. The BOS complex is part of the multi-pass translocon (MPT) complex, composed of three subcomplexes, the GEL complex (composed of RAB5IF/OPTI and TMCO1), the BOS complex (composed of NCLN/Nicalin, NOMO and TMEM147) and the PAT complex (composed of WDR83OS/Asterix and CCDC47). The MPT complex associates with the SEC61 complex. Due to the strong similarity between NOMO1, NOMO2 and NOMO3, similar interaction pattern probably occur for the three gene copies. In terms of tissue distribution, highly expressed in pancreas and skeletal muscle and, at lower levels, in heart.

Its subcellular location is the endoplasmic reticulum membrane. Component of the multi-pass translocon (MPT) complex that mediates insertion of multi-pass membrane proteins into the lipid bilayer of membranes. The MPT complex takes over after the SEC61 complex: following membrane insertion of the first few transmembrane segments of proteins by the SEC61 complex, the MPT complex occludes the lateral gate of the SEC61 complex to promote insertion of subsequent transmembrane regions. The sequence is that of BOS complex subunit NOMO2 (NOMO2) from Homo sapiens (Human).